The primary structure comprises 280 residues: 4-diphosphocytidyl-2-C-methyl-D-erythritol kinase (280 aa).

Lysine 8 is an active-site residue. 91 to 101 (PVAAGLAGGST) contributes to the ATP binding site. Aspartate 133 is an active-site residue.

This sequence belongs to the GHMP kinase family. IspE subfamily.

The catalysed reaction is 4-CDP-2-C-methyl-D-erythritol + ATP = 4-CDP-2-C-methyl-D-erythritol 2-phosphate + ADP + H(+). It participates in isoprenoid biosynthesis; isopentenyl diphosphate biosynthesis via DXP pathway; isopentenyl diphosphate from 1-deoxy-D-xylulose 5-phosphate: step 3/6. Functionally, catalyzes the phosphorylation of the position 2 hydroxy group of 4-diphosphocytidyl-2C-methyl-D-erythritol. This Clostridium botulinum (strain Loch Maree / Type A3) protein is 4-diphosphocytidyl-2-C-methyl-D-erythritol kinase.